A 454-amino-acid chain; its full sequence is Bifunctional protein GlmU (454 aa).

The interval 1-228 (MTLPLHVVIL…PQDVEGANDP (228 aa)) is pyrophosphorylase. Residues 10-13 (LAAG), K24, Q76, 81-82 (GT), 103-105 (YGD), G138, E153, N168, and N226 each bind UDP-N-acetyl-alpha-D-glucosamine. D105 provides a ligand contact to Mg(2+). N226 serves as a coordination point for Mg(2+). The interval 229–249 (WQLAQLERAWQLRAARALSLQ) is linker. The interval 250–454 (GVRMADPARV…IEGWERPTKK (205 aa)) is N-acetyltransferase. UDP-N-acetyl-alpha-D-glucosamine-binding residues include R332 and K350. The Proton acceptor role is filled by H362. UDP-N-acetyl-alpha-D-glucosamine contacts are provided by Y365 and N376. Residues A379, 385–386 (NY), S404, A422, and R439 contribute to the acetyl-CoA site.

This sequence in the N-terminal section; belongs to the N-acetylglucosamine-1-phosphate uridyltransferase family. The protein in the C-terminal section; belongs to the transferase hexapeptide repeat family. In terms of assembly, homotrimer. The cofactor is Mg(2+).

Its subcellular location is the cytoplasm. It catalyses the reaction alpha-D-glucosamine 1-phosphate + acetyl-CoA = N-acetyl-alpha-D-glucosamine 1-phosphate + CoA + H(+). The enzyme catalyses N-acetyl-alpha-D-glucosamine 1-phosphate + UTP + H(+) = UDP-N-acetyl-alpha-D-glucosamine + diphosphate. It participates in nucleotide-sugar biosynthesis; UDP-N-acetyl-alpha-D-glucosamine biosynthesis; N-acetyl-alpha-D-glucosamine 1-phosphate from alpha-D-glucosamine 6-phosphate (route II): step 2/2. It functions in the pathway nucleotide-sugar biosynthesis; UDP-N-acetyl-alpha-D-glucosamine biosynthesis; UDP-N-acetyl-alpha-D-glucosamine from N-acetyl-alpha-D-glucosamine 1-phosphate: step 1/1. The protein operates within bacterial outer membrane biogenesis; LPS lipid A biosynthesis. In terms of biological role, catalyzes the last two sequential reactions in the de novo biosynthetic pathway for UDP-N-acetylglucosamine (UDP-GlcNAc). The C-terminal domain catalyzes the transfer of acetyl group from acetyl coenzyme A to glucosamine-1-phosphate (GlcN-1-P) to produce N-acetylglucosamine-1-phosphate (GlcNAc-1-P), which is converted into UDP-GlcNAc by the transfer of uridine 5-monophosphate (from uridine 5-triphosphate), a reaction catalyzed by the N-terminal domain. The polypeptide is Bifunctional protein GlmU (Xanthomonas oryzae pv. oryzae (strain MAFF 311018)).